Consider the following 125-residue polypeptide: MIDSPRVCVQVQSVYIESQSTPDDERFVFAYTVTIRNLGRMPVQLLGRYWLITNGNGREIEVQGEGVVGEQPHIAPGEEFQYTSGAVIETPMGTMQGHYEMVDVDGNAFRVAVPVFRLAVPTFIH.

In terms of domain architecture, ApaG spans 1–125; that stretch reads MIDSPRVCVQ…FRLAVPTFIH (125 aa).

The chain is Protein ApaG from Enterobacter sp. (strain 638).